The sequence spans 141 residues: Nuclear transcription factor Y subunit B-1 (141 aa).

The tract at residues 1–23 is disordered; it reads MADTPSSPAGDGGESGGSVREQD. Ala-2 is subject to N-acetylalanine. The DNA-binding element occupies 26-32; it reads LPIANIS. Residues 53 to 64 are subunit association domain (SAD); sequence VQECVSEFISFI. The tract at residues 114 to 141 is disordered; that stretch reads DNKGSGKSGDGSNRDAGGGVSGEEMPSW.

Belongs to the NFYB/HAP3 subunit family. Heterotrimeric transcription factor composed of three components, NF-YA, NF-YB and NF-YC. NF-YB and NF-YC must interact and dimerize for NF-YA association and DNA binding. Binds directly with DPB3-1. In terms of tissue distribution, ubiquitous. Predominantly expressed in leaves, flowers and siliques.

Its subcellular location is the nucleus. Functionally, component of the NF-Y/HAP transcription factor complex. The NF-Y complex stimulates the transcription of various genes by recognizing and binding to a CCAAT motif in promoters. The protein is Nuclear transcription factor Y subunit B-1 of Arabidopsis thaliana (Mouse-ear cress).